Reading from the N-terminus, the 448-residue chain is Tumor necrosis factor receptor superfamily member EDAR (448 aa).

Residues 1–26 form the signal peptide; the sequence is MAHVGDCTQTPWLPVLVVSLMCSARA. Topologically, residues 27-187 are extracellular; it reads EYSNCGENEY…LSGQGHLATA (161 aa). TNFR-Cys repeat units follow at residues 30-71, 73-113, and 115-148; these read NCGE…DYGC, PCPA…DAEC, and PCLP…TKEC. Cystine bridges form between Cys-31–Cys-44, Cys-47–Cys-60, Cys-50–Cys-71, Cys-74–Cys-87, Cys-93–Cys-113, and Cys-135–Cys-148. A glycan (N-linked (GlcNAc...) asparagine) is linked at Asn-38. A helical transmembrane segment spans residues 188-208; that stretch reads LIIAMSTIFIMAIAIVLIIMF. Topologically, residues 209–448 are cytoplasmic; the sequence is YILKTKPSAP…PPASQPHAAS (240 aa). Positions 220–297 are disordered; it reads CCTSHPGKSV…EEPAPDKQGS (78 aa). Basic and acidic residues predominate over residues 233–243; sequence VSKDEEKKEAP. Over residues 271–283 the composition is skewed to polar residues; it reads DASSENEQLLSRS. The 74-residue stretch at 358-431 folds into the Death domain; sequence RMLSSTYNSE…DAVESLCADI (74 aa).

In terms of assembly, binds to EDARADD. Associates with TRAF1, TRAF2, TRAF3 and NIK. Detected in fetal kidney, lung, skin and cultured neonatal epidermal keratinocytes. Not detected in lymphoblast and fibroblast cell lines.

It is found in the membrane. In terms of biological role, receptor for EDA isoform A1, but not for EDA isoform A2. Mediates the activation of NF-kappa-B and JNK. May promote caspase-independent cell death. The sequence is that of Tumor necrosis factor receptor superfamily member EDAR (EDAR) from Homo sapiens (Human).